The sequence spans 492 residues: Prostaglandin E2 receptor EP4 subtype (492 aa).

Residues 1-19 are Extracellular-facing; the sequence is MSIPGTNASSSQASNPLNS. Residue Asn7 is glycosylated (N-linked (GlcNAc...) asparagine). The chain crosses the membrane as a helical span at residues 20-43; that stretch reads PVTIPAVMFIFGVVGNLVAIVVLC. The Cytoplasmic segment spans residues 44–55; the sequence is KSRKEQKETTFY. A helical membrane pass occupies residues 56–79; it reads TLVCGLAVTDLLGTLLVSPVTIAT. Topologically, residues 80-96 are extracellular; sequence YLKGQWPGGHALCEYST. An intrachain disulfide couples Cys92 to Cys170. The chain crosses the membrane as a helical span at residues 97 to 115; that stretch reads FILLFFGLSGLSIICAMSI. Residues 116 to 135 are Cytoplasmic-facing; it reads ERYLAINHAYFYSHYVDKRL. Residues 136–160 form a helical membrane-spanning segment; it reads AGLTLFAVYASNVLFCALPSMGLGS. At 161–184 the chain is on the extracellular side; the sequence is SRLQYPATWCFIDWTTNVTAHAAF. A helical membrane pass occupies residues 185 to 211; sequence SYMYAGFSSFLILATVLCNVLVCGALL. Topologically, residues 212-273 are cytoplasmic; it reads RMHRQFMRRT…RSFRRIAGAE (62 aa). The helical transmembrane segment at 274-301 threads the bilayer; the sequence is IQMVILLIATSLVVLICSIPLVVRVFVN. Residues 302 to 318 lie on the Extracellular side of the membrane; that stretch reads QLYRPQLEPVIGKNPDL. Residues 319-338 traverse the membrane as a helical segment; it reads QAIRIASVSPILDPWIYILL. Residues 339–492 are Cytoplasmic-facing; it reads RKTVLSKAIE…ETLNLSEKCI (154 aa). Positions 361–374 are enriched in basic and acidic residues; it reads RRERSGPHCSDSRR. The tract at residues 361–383 is disordered; the sequence is RRERSGPHCSDSRRTSSAVSGHS. Residues Ser380, Ser383, Ser385, and Ser388 each carry the phosphoserine modification.

Belongs to the G-protein coupled receptor 1 family. As to quaternary structure, interacts with FEM1A. Post-translationally, phosphorylation mediates agonist-mediated desensitization by promoting cytoplasmic retention.

Its subcellular location is the cell membrane. In terms of biological role, receptor for prostaglandin E2 (PGE2). The activity of this receptor is mediated by G(s) proteins that stimulate adenylate cyclase. Has a relaxing effect on smooth muscle. May play an important role in regulating renal hemodynamics, intestinal epithelial transport, adrenal aldosterone secretion, and uterine function. This Bos taurus (Bovine) protein is Prostaglandin E2 receptor EP4 subtype (PTGER4).